Consider the following 506-residue polypeptide: ATP synthase subunit alpha, plastid (506 aa).

170-177 lines the ATP pocket; the sequence is GDRQTGKT.

It belongs to the ATPase alpha/beta chains family. As to quaternary structure, F-type ATPases have 2 components, CF(1) - the catalytic core - and CF(0) - the membrane proton channel. CF(1) has five subunits: alpha(3), beta(3), gamma(1), delta(1), epsilon(1). CF(0) has four main subunits: a, b, b' and c.

The protein localises to the plastid membrane. It catalyses the reaction ATP + H2O + 4 H(+)(in) = ADP + phosphate + 5 H(+)(out). Produces ATP from ADP in the presence of a proton gradient across the membrane. The alpha chain is a regulatory subunit. This is ATP synthase subunit alpha, plastid from Prototheca wickerhamii.